Consider the following 364-residue polypeptide: Putative apoptosis inhibitor ORF42 (364 aa).

The stretch at 24-89 (RLATFRGYEY…CREGVVSAPQ (66 aa)) is one BIR 1 repeat. Residues 83–126 (GVVSAPQQQPPPPPSTSIGAVGGDPRPEDMNVPERGWDPPMSKD) form a disordered region. Residues 117–126 (RGWDPPMSKD) show a composition bias toward basic and acidic residues. BIR repeat units follow at residues 127 to 193 (PKST…PLVV) and 236 to 300 (RIAS…ANMA). Residues 315–350 (CVICLGAKADTILKPCLHYSLCYGCSTQVQKCPLCR) form an RING-type zinc finger.

May act as an apoptosis inhibitor. In Magallana gigas (Pacific oyster), this protein is Putative apoptosis inhibitor ORF42.